A 197-amino-acid chain; its full sequence is Elongation factor Ts (197 aa).

The segment at 81–84 (TDFV) is involved in Mg(2+) ion dislocation from EF-Tu.

This sequence belongs to the EF-Ts family.

It is found in the cytoplasm. In terms of biological role, associates with the EF-Tu.GDP complex and induces the exchange of GDP to GTP. It remains bound to the aminoacyl-tRNA.EF-Tu.GTP complex up to the GTP hydrolysis stage on the ribosome. In Petrotoga mobilis (strain DSM 10674 / SJ95), this protein is Elongation factor Ts.